The sequence spans 815 residues: (E)-gamma-bisabolene synthase (815 aa).

Positions 561, 565, 709, and 717 each coordinate Mg(2+). A DDXXD motif motif is present at residues 561 to 565; sequence DDMYD.

It belongs to the terpene synthase family. Tpsd subfamily. Requires Mg(2+) as cofactor. It depends on Mn(2+) as a cofactor.

It localises to the cytoplasm. The catalysed reaction is (2E,6E)-farnesyl diphosphate = (E)-gamma-bisabolene + diphosphate. It participates in terpene metabolism; oleoresin biosynthesis. Its function is as follows. Involved in defensive oleoresin formation in conifers in response to insect attack or other injury. Involved in sesquiterpene (C15) olefins biosynthesis. Produces mainly (E)-gamma-bisabolene when used with farnesyl diphosphate as substrate. No activity with geranyl diphosphate or geranylgeranyl diphosphate. The protein is (E)-gamma-bisabolene synthase (TPS3) of Pseudotsuga menziesii (Douglas-fir).